The primary structure comprises 359 residues: Aminomethyltransferase (359 aa).

The protein belongs to the GcvT family. As to quaternary structure, the glycine cleavage system is composed of four proteins: P, T, L and H.

The catalysed reaction is N(6)-[(R)-S(8)-aminomethyldihydrolipoyl]-L-lysyl-[protein] + (6S)-5,6,7,8-tetrahydrofolate = N(6)-[(R)-dihydrolipoyl]-L-lysyl-[protein] + (6R)-5,10-methylene-5,6,7,8-tetrahydrofolate + NH4(+). Functionally, the glycine cleavage system catalyzes the degradation of glycine. In Idiomarina loihiensis (strain ATCC BAA-735 / DSM 15497 / L2-TR), this protein is Aminomethyltransferase.